Here is a 250-residue protein sequence, read N- to C-terminus: Pyrroloquinoline-quinone synthase (250 aa).

The protein belongs to the PqqC family.

It carries out the reaction 6-(2-amino-2-carboxyethyl)-7,8-dioxo-1,2,3,4,7,8-hexahydroquinoline-2,4-dicarboxylate + 3 O2 = pyrroloquinoline quinone + 2 H2O2 + 2 H2O + H(+). Its pathway is cofactor biosynthesis; pyrroloquinoline quinone biosynthesis. Ring cyclization and eight-electron oxidation of 3a-(2-amino-2-carboxyethyl)-4,5-dioxo-4,5,6,7,8,9-hexahydroquinoline-7,9-dicarboxylic-acid to PQQ. The chain is Pyrroloquinoline-quinone synthase from Xanthomonas campestris pv. campestris (strain B100).